Reading from the N-terminus, the 196-residue chain is DnaA initiator-associating protein DiaA (196 aa).

The 163-residue stretch at 34–196 (LVQSLLNGNK…DNTLFPHQAD (163 aa)) folds into the SIS domain.

This sequence belongs to the SIS family. DiaA subfamily. In terms of assembly, homotetramer; dimer of dimers.

Required for the timely initiation of chromosomal replication via direct interactions with the DnaA initiator protein. This is DnaA initiator-associating protein DiaA from Edwardsiella ictaluri (strain 93-146).